We begin with the raw amino-acid sequence, 375 residues long: Alcohol dehydrogenase 1B (375 aa).

Serine 1 carries the post-translational modification N-acetylserine. The Zn(2+) site is built by cysteine 46, histidine 67, cysteine 97, cysteine 100, cysteine 103, cysteine 111, and cysteine 174. Residues 199-204 (GLGGVG), aspartate 223, lysine 228, 293-295 (VGV), and arginine 370 contribute to the NAD(+) site.

The protein belongs to the zinc-containing alcohol dehydrogenase family. Class-I subfamily. As to quaternary structure, multimeric (with different ratios of monomers). The cofactor is Zn(2+).

It is found in the cytoplasm. It carries out the reaction a primary alcohol + NAD(+) = an aldehyde + NADH + H(+). It catalyses the reaction a secondary alcohol + NAD(+) = a ketone + NADH + H(+). In Saara hardwickii (Indian spiny-tailed lizard), this protein is Alcohol dehydrogenase 1B.